The following is a 272-amino-acid chain: MAVVTMRELLDAGVHFGHQTRRWNPKMRRFIFTERNGIYIIDLQQTLTYIDQAFEFVKETVAHGGTVLFVGTKKQAQEAVQVEADRVGMPYVNHRWLGGMLTNFQTVSKRLNRMKELQAMDAAENGYEGRTKREVLMLTRERTKLERVLGGIAEMTRVPSALWIIDTNKEHIAVAEAHKLNIPVVAILDTNCDPDVVDFPVPGNDDAIRSTALLSRVISTAVEEGKKAREERQLAAAKDAAGDAKPEAEEAPAAAEAEEAPAAEAEEAPAAE.

The span at 224-233 (EGKKAREERQ) shows a compositional bias: basic and acidic residues. Positions 224-272 (EGKKAREERQLAAAKDAAGDAKPEAEEAPAAAEAEEAPAAEAEEAPAAE) are disordered. The segment covering 256–272 (EAEEAPAAEAEEAPAAE) has biased composition (acidic residues).

The protein belongs to the universal ribosomal protein uS2 family.

In Corynebacterium glutamicum (strain ATCC 13032 / DSM 20300 / JCM 1318 / BCRC 11384 / CCUG 27702 / LMG 3730 / NBRC 12168 / NCIMB 10025 / NRRL B-2784 / 534), this protein is Small ribosomal subunit protein uS2.